We begin with the raw amino-acid sequence, 86 residues long: Acyl-CoA-binding protein homolog 1 (86 aa).

The 86-residue stretch at 1–86 (MTLSFDDAAA…VEELIAKYGA (86 aa)) folds into the ACB domain. Residues K13, 28–32 (YALFK), K50, K54, and Y73 contribute to the an acyl-CoA site.

The protein belongs to the ACBP family.

Functionally, binds medium- and long-chain acyl-CoA esters with very high affinity and may function as an intracellular carrier of acyl-CoA esters. This Caenorhabditis elegans protein is Acyl-CoA-binding protein homolog 1 (acbp-1).